The sequence spans 249 residues: DNA polymerase sliding clamp (249 aa).

The protein belongs to the PCNA family. As to quaternary structure, homotrimer. The subunits circularize to form a toroid; DNA passes through its center. Replication factor C (RFC) is required to load the toroid on the DNA.

In terms of biological role, sliding clamp subunit that acts as a moving platform for DNA processing. Responsible for tethering the catalytic subunit of DNA polymerase and other proteins to DNA during high-speed replication. This is DNA polymerase sliding clamp from Thermococcus gammatolerans (strain DSM 15229 / JCM 11827 / EJ3).